A 177-amino-acid chain; its full sequence is ATP synthase subunit delta (177 aa).

This sequence belongs to the ATPase delta chain family. In terms of assembly, F-type ATPases have 2 components, F(1) - the catalytic core - and F(0) - the membrane proton channel. F(1) has five subunits: alpha(3), beta(3), gamma(1), delta(1), epsilon(1). F(0) has three main subunits: a(1), b(2) and c(10-14). The alpha and beta chains form an alternating ring which encloses part of the gamma chain. F(1) is attached to F(0) by a central stalk formed by the gamma and epsilon chains, while a peripheral stalk is formed by the delta and b chains.

It is found in the cell inner membrane. F(1)F(0) ATP synthase produces ATP from ADP in the presence of a proton or sodium gradient. F-type ATPases consist of two structural domains, F(1) containing the extramembraneous catalytic core and F(0) containing the membrane proton channel, linked together by a central stalk and a peripheral stalk. During catalysis, ATP synthesis in the catalytic domain of F(1) is coupled via a rotary mechanism of the central stalk subunits to proton translocation. Functionally, this protein is part of the stalk that links CF(0) to CF(1). It either transmits conformational changes from CF(0) to CF(1) or is implicated in proton conduction. In Vibrio vulnificus (strain CMCP6), this protein is ATP synthase subunit delta.